The chain runs to 60 residues: Large ribosomal subunit protein uL30 (60 aa).

This sequence belongs to the universal ribosomal protein uL30 family. Part of the 50S ribosomal subunit.

In Limosilactobacillus fermentum (strain NBRC 3956 / LMG 18251) (Lactobacillus fermentum), this protein is Large ribosomal subunit protein uL30.